Here is a 272-residue protein sequence, read N- to C-terminus: Bifunctional protein FolD (272 aa).

Residues 155–157 (GRS), serine 182, and isoleucine 223 each bind NADP(+).

The protein belongs to the tetrahydrofolate dehydrogenase/cyclohydrolase family. In terms of assembly, homodimer.

It carries out the reaction (6R)-5,10-methylene-5,6,7,8-tetrahydrofolate + NADP(+) = (6R)-5,10-methenyltetrahydrofolate + NADPH. The enzyme catalyses (6R)-5,10-methenyltetrahydrofolate + H2O = (6R)-10-formyltetrahydrofolate + H(+). The protein operates within one-carbon metabolism; tetrahydrofolate interconversion. Its function is as follows. Catalyzes the oxidation of 5,10-methylenetetrahydrofolate to 5,10-methenyltetrahydrofolate and then the hydrolysis of 5,10-methenyltetrahydrofolate to 10-formyltetrahydrofolate. The sequence is that of Bifunctional protein FolD from Fervidobacterium nodosum (strain ATCC 35602 / DSM 5306 / Rt17-B1).